A 195-amino-acid chain; its full sequence is Protein GrpE (195 aa).

It belongs to the GrpE family. In terms of assembly, homodimer.

It localises to the cytoplasm. In terms of biological role, participates actively in the response to hyperosmotic and heat shock by preventing the aggregation of stress-denatured proteins, in association with DnaK and GrpE. It is the nucleotide exchange factor for DnaK and may function as a thermosensor. Unfolded proteins bind initially to DnaJ; upon interaction with the DnaJ-bound protein, DnaK hydrolyzes its bound ATP, resulting in the formation of a stable complex. GrpE releases ADP from DnaK; ATP binding to DnaK triggers the release of the substrate protein, thus completing the reaction cycle. Several rounds of ATP-dependent interactions between DnaJ, DnaK and GrpE are required for fully efficient folding. This is Protein GrpE from Francisella tularensis subsp. tularensis (strain FSC 198).